A 375-amino-acid polypeptide reads, in one-letter code: Trichodiene synthase (375 aa).

It belongs to the trichodiene synthase family.

It catalyses the reaction (2E,6E)-farnesyl diphosphate = trichodiene + diphosphate. It functions in the pathway sesquiterpene biosynthesis; trichothecene biosynthesis. TS is a member of the terpene cyclase group of enzymes. It catalyzes the isomerization and cyclization of farnesyl pyro-phosphate to form trichodiene, the first cyclic intermediate in the biosynthetic pathway for trichothecenes. It serves to branch trichothecene biosynthesis from the isoprenoid pathway. The sequence is that of Trichodiene synthase (TRI5) from Fusarium pseudograminearum (Wheat and barley crown-rot fungus).